Consider the following 404-residue polypeptide: Cysteine desulfurase IscS (404 aa).

Pyridoxal 5'-phosphate-binding positions include 75-76 (AT), asparagine 155, glutamine 183, and 203-205 (SAH). Lysine 206 is modified (N6-(pyridoxal phosphate)lysine). Threonine 243 contributes to the pyridoxal 5'-phosphate binding site. Cysteine 328 acts as the Cysteine persulfide intermediate in catalysis. Cysteine 328 is a [2Fe-2S] cluster binding site.

The protein belongs to the class-V pyridoxal-phosphate-dependent aminotransferase family. NifS/IscS subfamily. As to quaternary structure, homodimer. Forms a heterotetramer with IscU, interacts with other sulfur acceptors. Requires pyridoxal 5'-phosphate as cofactor.

Its subcellular location is the cytoplasm. It catalyses the reaction (sulfur carrier)-H + L-cysteine = (sulfur carrier)-SH + L-alanine. It functions in the pathway cofactor biosynthesis; iron-sulfur cluster biosynthesis. In terms of biological role, master enzyme that delivers sulfur to a number of partners involved in Fe-S cluster assembly, tRNA modification or cofactor biosynthesis. Catalyzes the removal of elemental sulfur atoms from cysteine to produce alanine. Functions as a sulfur delivery protein for Fe-S cluster synthesis onto IscU, an Fe-S scaffold assembly protein, as well as other S acceptor proteins. This chain is Cysteine desulfurase IscS, found in Vibrio cholerae serotype O1 (strain ATCC 39541 / Classical Ogawa 395 / O395).